A 451-amino-acid chain; its full sequence is SH2 domain-containing protein 7 (451 aa).

An SH2 domain is found at 51–142 (WFHGFITRKQ…PFKEMLTAAC (92 aa)). Disordered stretches follow at residues 180-232 (KAAS…SLLE), 256-321 (LGTE…SDAM), and 408-436 (GTPE…THKP). Low complexity predominate over residues 221-232 (SPLPEKSSSLLE). Over residues 279–291 (EAQRRLSDGEQNR) the composition is skewed to basic and acidic residues. Positions 306–316 (QGPTESPTSWG) are enriched in polar residues. Over residues 426–436 (KSKETGRTHKP) the composition is skewed to basic and acidic residues.

This Homo sapiens (Human) protein is SH2 domain-containing protein 7 (SH2D7).